Reading from the N-terminus, the 343-residue chain is Holliday junction branch migration complex subunit RuvB (343 aa).

Residues Met-1–Tyr-185 form a large ATPase domain (RuvB-L) region. ATP-binding positions include Leu-24, Arg-25, Gly-66, Lys-69, Thr-70, Thr-71, Glu-132–Tyr-134, Arg-175, Tyr-185, and Arg-222. Position 70 (Thr-70) interacts with Mg(2+). Residues Asp-186–Asn-256 are small ATPAse domain (RuvB-S). A head domain (RuvB-H) region spans residues Lys-259–Asp-343. Residues Arg-314 and Arg-319 each coordinate DNA.

The protein belongs to the RuvB family. As to quaternary structure, homohexamer. Forms an RuvA(8)-RuvB(12)-Holliday junction (HJ) complex. HJ DNA is sandwiched between 2 RuvA tetramers; dsDNA enters through RuvA and exits via RuvB. An RuvB hexamer assembles on each DNA strand where it exits the tetramer. Each RuvB hexamer is contacted by two RuvA subunits (via domain III) on 2 adjacent RuvB subunits; this complex drives branch migration. In the full resolvosome a probable DNA-RuvA(4)-RuvB(12)-RuvC(2) complex forms which resolves the HJ.

Its subcellular location is the cytoplasm. The enzyme catalyses ATP + H2O = ADP + phosphate + H(+). In terms of biological role, the RuvA-RuvB-RuvC complex processes Holliday junction (HJ) DNA during genetic recombination and DNA repair, while the RuvA-RuvB complex plays an important role in the rescue of blocked DNA replication forks via replication fork reversal (RFR). RuvA specifically binds to HJ cruciform DNA, conferring on it an open structure. The RuvB hexamer acts as an ATP-dependent pump, pulling dsDNA into and through the RuvAB complex. RuvB forms 2 homohexamers on either side of HJ DNA bound by 1 or 2 RuvA tetramers; 4 subunits per hexamer contact DNA at a time. Coordinated motions by a converter formed by DNA-disengaged RuvB subunits stimulates ATP hydrolysis and nucleotide exchange. Immobilization of the converter enables RuvB to convert the ATP-contained energy into a lever motion, pulling 2 nucleotides of DNA out of the RuvA tetramer per ATP hydrolyzed, thus driving DNA branch migration. The RuvB motors rotate together with the DNA substrate, which together with the progressing nucleotide cycle form the mechanistic basis for DNA recombination by continuous HJ branch migration. Branch migration allows RuvC to scan DNA until it finds its consensus sequence, where it cleaves and resolves cruciform DNA. The protein is Holliday junction branch migration complex subunit RuvB of Bacteroides thetaiotaomicron (strain ATCC 29148 / DSM 2079 / JCM 5827 / CCUG 10774 / NCTC 10582 / VPI-5482 / E50).